The sequence spans 329 residues: Glycerol-3-phosphate dehydrogenase [NAD(P)+] (329 aa).

4 residues coordinate NADPH: Ser10, Trp11, Arg31, and Lys105. The sn-glycerol 3-phosphate site is built by Lys105, Gly134, and Ser136. Ala138 lines the NADPH pocket. The sn-glycerol 3-phosphate site is built by Lys189, Asp242, Ser252, Arg253, and Asn254. Lys189 serves as the catalytic Proton acceptor. An NADPH-binding site is contributed by Arg253. NADPH is bound by residues Val277 and Glu279.

It belongs to the NAD-dependent glycerol-3-phosphate dehydrogenase family.

The protein resides in the cytoplasm. It carries out the reaction sn-glycerol 3-phosphate + NAD(+) = dihydroxyacetone phosphate + NADH + H(+). The enzyme catalyses sn-glycerol 3-phosphate + NADP(+) = dihydroxyacetone phosphate + NADPH + H(+). The protein operates within membrane lipid metabolism; glycerophospholipid metabolism. Catalyzes the reduction of the glycolytic intermediate dihydroxyacetone phosphate (DHAP) to sn-glycerol 3-phosphate (G3P), the key precursor for phospholipid synthesis. The protein is Glycerol-3-phosphate dehydrogenase [NAD(P)+] of Neisseria meningitidis serogroup A / serotype 4A (strain DSM 15465 / Z2491).